We begin with the raw amino-acid sequence, 496 residues long: Adenosylhomocysteinase (496 aa).

Thr68, Asp157, and Glu219 together coordinate substrate. An NAD(+)-binding site is contributed by 220-222; that stretch reads TTT. The substrate site is built by Lys249 and Asp253. NAD(+) is bound by residues Asn254, 283-288, Glu306, Asn341, 362-364, and Asn410; these read GYGDVG and IGH.

The protein belongs to the adenosylhomocysteinase family. It depends on NAD(+) as a cofactor.

It is found in the cytoplasm. The enzyme catalyses S-adenosyl-L-homocysteine + H2O = L-homocysteine + adenosine. Its pathway is amino-acid biosynthesis; L-homocysteine biosynthesis; L-homocysteine from S-adenosyl-L-homocysteine: step 1/1. Functionally, may play a key role in the regulation of the intracellular concentration of adenosylhomocysteine. This is Adenosylhomocysteinase from Mycolicibacterium paratuberculosis (strain ATCC BAA-968 / K-10) (Mycobacterium paratuberculosis).